Here is a 159-residue protein sequence, read N- to C-terminus: 2-C-methyl-D-erythritol 2,4-cyclodiphosphate synthase (159 aa).

Aspartate 10 and histidine 12 together coordinate a divalent metal cation. 4-CDP-2-C-methyl-D-erythritol 2-phosphate contacts are provided by residues 10–12 and 37–38; these read DVH and HS. Residue histidine 45 participates in a divalent metal cation binding. Residues 59 to 61, 64 to 68, 103 to 109, 135 to 138, phenylalanine 142, and arginine 145 contribute to the 4-CDP-2-C-methyl-D-erythritol 2-phosphate site; these read DIG, FPDTD, AQAPKML, and TTTE.

It belongs to the IspF family. Homotrimer. The cofactor is a divalent metal cation.

It carries out the reaction 4-CDP-2-C-methyl-D-erythritol 2-phosphate = 2-C-methyl-D-erythritol 2,4-cyclic diphosphate + CMP. It participates in isoprenoid biosynthesis; isopentenyl diphosphate biosynthesis via DXP pathway; isopentenyl diphosphate from 1-deoxy-D-xylulose 5-phosphate: step 4/6. Involved in the biosynthesis of isopentenyl diphosphate (IPP) and dimethylallyl diphosphate (DMAPP), two major building blocks of isoprenoid compounds. Catalyzes the conversion of 4-diphosphocytidyl-2-C-methyl-D-erythritol 2-phosphate (CDP-ME2P) to 2-C-methyl-D-erythritol 2,4-cyclodiphosphate (ME-CPP) with a corresponding release of cytidine 5-monophosphate (CMP). This chain is 2-C-methyl-D-erythritol 2,4-cyclodiphosphate synthase, found in Francisella tularensis subsp. novicida (strain U112).